The following is a 220-amino-acid chain: PRA1 family protein B4 (220 aa).

Positions 1–27 are disordered; that stretch reads MASSAPPVLPISNPQTVPSAAPSSVES. The segment covering 12 to 27 has biased composition (polar residues); sequence SNPQTVPSAAPSSVES. The next 5 membrane-spanning stretches (helical) occupy residues 83 to 103, 105 to 125, 146 to 166, 170 to 190, and 196 to 216; these read YSYF…FSLV, HPFS…LYLF, GCLI…SVLV, MIGV…DLFL, and AATG…PAVI.

Belongs to the PRA1 family. Interacts with PRA1B1, PRA1B2, PRA1B3, PRA1B5, PRA1B6 and PRA1E. As to expression, expressed in roots, lateral roots, lateral root caps, stomata and trichomes.

It is found in the endosome membrane. Functionally, may be involved in both secretory and endocytic intracellular trafficking in the endosomal/prevacuolar compartments. This is PRA1 family protein B4 (PRA1B4) from Arabidopsis thaliana (Mouse-ear cress).